The chain runs to 72 residues: Translation initiation factor IF-1 (72 aa).

The region spanning 1 to 72 is the S1-like domain; sequence MAKEDVIEMQ…SKGRIVFRAR (72 aa).

This sequence belongs to the IF-1 family. As to quaternary structure, component of the 30S ribosomal translation pre-initiation complex which assembles on the 30S ribosome in the order IF-2 and IF-3, IF-1 and N-formylmethionyl-tRNA(fMet); mRNA recruitment can occur at any time during PIC assembly.

The protein resides in the cytoplasm. Its function is as follows. One of the essential components for the initiation of protein synthesis. Stabilizes the binding of IF-2 and IF-3 on the 30S subunit to which N-formylmethionyl-tRNA(fMet) subsequently binds. Helps modulate mRNA selection, yielding the 30S pre-initiation complex (PIC). Upon addition of the 50S ribosomal subunit IF-1, IF-2 and IF-3 are released leaving the mature 70S translation initiation complex. This is Translation initiation factor IF-1 from Photobacterium profundum (strain SS9).